Consider the following 801-residue polypeptide: Lon protease 2 (801 aa).

A Lon N-terminal domain is found at 14 to 209 (LPMLPVRDIV…LVNEILAAEL (196 aa)). 361–368 (GPPGVGKT) contacts ATP. Residues 597–778 (DSQVGVVQGL…DEVFAVAFDK (182 aa)) enclose the Lon proteolytic domain. Active-site residues include Ser684 and Lys727. Positions 780–791 (AKGQEKKPAAKK) are enriched in basic and acidic residues. The disordered stretch occupies residues 780–801 (AKGQEKKPAAKKDPKKTKSLAA). The span at 792–801 (DPKKTKSLAA) shows a compositional bias: basic residues.

It belongs to the peptidase S16 family. As to quaternary structure, homohexamer. Organized in a ring with a central cavity.

The protein localises to the cytoplasm. The enzyme catalyses Hydrolysis of proteins in presence of ATP.. Its function is as follows. ATP-dependent serine protease that mediates the selective degradation of mutant and abnormal proteins as well as certain short-lived regulatory proteins. Required for cellular homeostasis and for survival from DNA damage and developmental changes induced by stress. Degrades polypeptides processively to yield small peptide fragments that are 5 to 10 amino acids long. Binds to DNA in a double-stranded, site-specific manner. This is Lon protease 2 from Bdellovibrio bacteriovorus (strain ATCC 15356 / DSM 50701 / NCIMB 9529 / HD100).